Here is a 270-residue protein sequence, read N- to C-terminus: Phosphatidylinositol transfer protein alpha isoform (270 aa).

A 1,2-diacyl-sn-glycero-3-phospho-(1D-myo-inositol) is bound by residues T58, K60, E85, N89, T96, and K194. K215 carries the N6-acetyllysine modification. Over residues T250 to V263 the composition is skewed to basic and acidic residues. Positions T250–D270 are disordered.

It belongs to the PtdIns transfer protein family. PI transfer class I subfamily.

Its subcellular location is the cytoplasm. The protein localises to the nucleus. It carries out the reaction a 1,2-diacyl-sn-glycero-3-phosphocholine(in) = a 1,2-diacyl-sn-glycero-3-phosphocholine(out). The enzyme catalyses a 1,2-diacyl-sn-glycero-3-phospho-(1D-myo-inositol)(in) = a 1,2-diacyl-sn-glycero-3-phospho-(1D-myo-inositol)(out). Phosphatidylinositol transfer activity is inhibited by N-ethylmaleimide. In terms of biological role, catalyzes the transfer of phosphatidylinositol (PI) and phosphatidylcholine (PC) between membranes. Shows a preference for PI and PC containing shorter saturated or monosaturated acyl chains at the sn-1 and sn-2 positions. Preference order for PC is C16:1 &gt; C16:0 &gt; C18:1 &gt; C18:0 &gt; C20:4 and for PI is C16:1 &gt; C16:0 &gt; C18:1 &gt; C18:0 &gt; C20:4 &gt; C20:3. The polypeptide is Phosphatidylinositol transfer protein alpha isoform (PITPNA) (Homo sapiens (Human)).